A 102-amino-acid polypeptide reads, in one-letter code: Acid shock protein (102 aa).

A signal peptide spans 1–21; sequence MKKVLALVVAAAMGLSSAAFA. The segment covering 22–41 has biased composition (low complexity); sequence AETATTPAPTATTTKAAPAK. Residues 22 to 58 constitute a propeptide that is removed on maturation; it reads AETATTPAPTATTTKAAPAKTTHHKKQHKAAPAQKAQ. The interval 22–102 is disordered; it reads AETATTPAPT…PAKPAAQPAA (81 aa). The span at 80–90 shows a compositional bias: basic residues; the sequence is AAKKHAGKHGH. Residues 91–102 show a composition bias toward low complexity; the sequence is QQPAKPAAQPAA.

This sequence belongs to the Asr family. Post-translationally, proteolytic processing gives rise to the active protein.

Its subcellular location is the periplasm. Its function is as follows. Required for growth and/or survival at acidic conditions. This is Acid shock protein from Shigella flexneri.